Reading from the N-terminus, the 512-residue chain is Reduced folate transporter (512 aa).

The residue at position 1 (Met-1) is an N-acetylmethionine. Residues 1–29 (MVPTGQVAEKQAYEEPRQDHELKSWRCLV) lie on the Cytoplasmic side of the membrane. The helical transmembrane segment at 30–50 (FYLCFFGFMAQLRPGESFITP) threads the bilayer. Residues Ile-48 and Thr-49 each coordinate folate. Residues 51–62 (FLLERKFTKEQV) lie on the Extracellular side of the membrane. A helical membrane pass occupies residues 63 to 85 (TNEIIPMLPYSHLAVLVPVFLLT). Topologically, residues 86-89 (DYLR) are cytoplasmic. A helical membrane pass occupies residues 90–110 (YKPVLVLQCLSFVCVWLLLLL). At 111–114 (GTSV) the chain is on the extracellular side. The chain crosses the membrane as a helical span at residues 115–137 (VHMQLMEVFYSVTMAARIAYSSY). Residues Glu-121 and Arg-131 each coordinate folate. Topologically, residues 138–151 (IFSLVHPSRYQRMA) are cytoplasmic. The chain crosses the membrane as a helical span at residues 152 to 176 (SYSRAAVLLGVFISSVLGQALVTVG). Val-162 serves as a coordination point for folate. At 177–181 (HISTY) the chain is on the extracellular side. A helical membrane pass occupies residues 182–200 (TLNCVSLGFILFSLVLSLF). Topologically, residues 201 to 266 (LKRPKRSLFF…ELVENARQPQ (66 aa)) are cytoplasmic. A helical membrane pass occupies residues 267 to 292 (LRLWCLWWVFNSSGYYLITYYVHVLW). Tyr-281, Tyr-282, and Tyr-286 together coordinate folate. The Extracellular portion of the chain corresponds to 293–300 (RSTDSSLS). Residues 301 to 323 (YNGAVDAASTLLSAITSFSAGFL) traverse the membrane as a helical segment. The Cytoplasmic segment spans residues 324–329 (SIRWTL). The chain crosses the membrane as a helical span at residues 330 to 350 (WSKLVIAGVIAIQASLVFCMF). Over 351 to 353 (QIR) the chain is Extracellular. The chain crosses the membrane as a helical span at residues 354–377 (DIWVCYVTFVLFRGAYQFLVPIAT). The folate site is built by Arg-366 and Gln-370. Over 378 to 391 (FQIASSLSKELCAL) the chain is Cytoplasmic. A helical membrane pass occupies residues 392–415 (VFGINTFLATALKTCITLVVSDKR). The tract at residues 400–412 (ATALKTCITLVVS) is required for substrate-binding. At 416 to 423 (GLGLQVRD) the chain is on the extracellular side. A helical membrane pass occupies residues 424-448 (QFRIYFIYFLMLSITCFAWAGLDGL). Topologically, residues 449–512 (RYCQRGRHQP…RGDLRVEAKA (64 aa)) are cytoplasmic. Residues Ser-467, Ser-472, and Ser-477 each carry the phosphoserine modification. The segment at 478-512 (LQDGDLRGPQPSAPQLLSEDGMEDDRGDLRVEAKA) is disordered.

Belongs to the reduced folate carrier (RFC) transporter (TC 2.A.48) family.

Its subcellular location is the cell membrane. The protein resides in the apical cell membrane. The protein localises to the basolateral cell membrane. The enzyme catalyses 5-amino-1-(5-phospho-beta-D-ribosyl)imidazole-4-carboxamide(in) + (6S)-5-methyl-5,6,7,8-tetrahydrofolate(out) = 5-amino-1-(5-phospho-beta-D-ribosyl)imidazole-4-carboxamide(out) + (6S)-5-methyl-5,6,7,8-tetrahydrofolate(in). Antiporter that mediates the import of reduced folates, driven by the export of organic anions. Also acts as an importer of immunoreactive cyclic dinucleotides, but with a lower transporter activity. Mechanistically, acts as a secondary active transporter, which exports intracellular organic anions down their concentration gradients to facilitate the uptake of its substrates. Has high affinity for N5-methyltetrahydrofolate, the predominant circulating form of folate. Also mediates the import of antifolate drug methotrexate. 5-amino-4-imidazolecarboxamide riboside (AICAR), when phosphorylated to AICAR monophosphate, can serve as an organic anion for antiporter activity. In Mus musculus (Mouse), this protein is Reduced folate transporter.